A 111-amino-acid polypeptide reads, in one-letter code: Beta-microseminoprotein (111 aa).

The N-terminal stretch at 1–20 is a signal peptide; sequence MKFLLGTLVVLATFVTLCNS. Q21 bears the Pyrrolidone carboxylic acid mark. Cystine bridges form between C22-C67, C35-C59, C54-C90, C57-C66, and C81-C104.

Belongs to the beta-microseminoprotein family. Homodimer; Interacts with PI16. Corpora lutea, mostly in the luteal cells surrounding blood vessels.

It localises to the secreted. The protein is Beta-microseminoprotein (MSMB) of Sus scrofa (Pig).